We begin with the raw amino-acid sequence, 396 residues long: Acetate kinase (396 aa).

Mg(2+) is bound at residue N7. ATP is bound at residue K14. R89 lines the substrate pocket. The active-site Proton donor/acceptor is the D146. Residues 206–210, 280–282, and 328–332 contribute to the ATP site; these read HLGNG, DLR, and GIGEN. E382 is a Mg(2+) binding site.

Belongs to the acetokinase family. In terms of assembly, homodimer. Mg(2+) is required as a cofactor. Mn(2+) serves as cofactor.

The protein resides in the cytoplasm. The enzyme catalyses acetate + ATP = acetyl phosphate + ADP. It participates in metabolic intermediate biosynthesis; acetyl-CoA biosynthesis; acetyl-CoA from acetate: step 1/2. In terms of biological role, catalyzes the formation of acetyl phosphate from acetate and ATP. Can also catalyze the reverse reaction. The sequence is that of Acetate kinase from Maridesulfovibrio salexigens (strain ATCC 14822 / DSM 2638 / NCIMB 8403 / VKM B-1763) (Desulfovibrio salexigens).